The primary structure comprises 279 residues: Isopentenyl-diphosphate delta-isomerase idi1 (279 aa).

Lys78 contacts substrate. Mg(2+) is bound by residues His82 and His93. The 159-residue stretch at 91–249 (LLHRAFSVFL…GLKFTPWFKL (159 aa)) folds into the Nudix hydrolase domain. 2 residues coordinate substrate: Gln111 and Lys116. Cys128 is a catalytic residue. Position 129 (Ser129) interacts with substrate. A Nudix box motif is present at residues 129–162 (SHPLGIPGETGAELDAAVLGVKRAAQRKLDQELG). 2 residues coordinate Mg(2+): Glu191 and Glu193. Glu193 is a catalytic residue.

It belongs to the IPP isomerase type 1 family. The cofactor is Mg(2+).

The enzyme catalyses isopentenyl diphosphate = dimethylallyl diphosphate. Its pathway is isoprenoid biosynthesis; dimethylallyl diphosphate biosynthesis; dimethylallyl diphosphate from isopentenyl diphosphate: step 1/1. Its function is as follows. Isopentenyl-diphosphate delta-isomerase; part of the second module of ergosterol biosynthesis pathway that includes the middle steps of the pathway. Idi1 catalyzes the 1,3-allylic rearrangement of isopentenyl (IPP) to its highly electrophilic allylic isomer, dimethylallyl diphosphate (DMAPP). The second module is carried out in the vacuole and involves the formation of farnesyl diphosphate, which is also an important intermediate in the biosynthesis of ubiquinone, dolichol, heme and prenylated proteins. Activity by the mevalonate kinase erg12 (AFUA_4G07780) first converts mevalonate into 5-phosphomevalonate. 5-phosphomevalonate is then further converted to 5-diphosphomevalonate by the phosphomevalonate kinase erg8 (AFUA_5G10680). The diphosphomevalonate decarboxylase mvd1 (AFUA_4G07130) then produces isopentenyl diphosphate. The isopentenyl-diphosphate delta-isomerase idi1 (AFUA_6G11160) then catalyzes the 1,3-allylic rearrangement of the homoallylic substrate isopentenyl (IPP) to its highly electrophilic allylic isomer, dimethylallyl diphosphate (DMAPP). Finally the farnesyl diphosphate synthase erg20 (AFUA_5G02450) catalyzes the sequential condensation of isopentenyl pyrophosphate with dimethylallyl pyrophosphate, and then with the resultant geranylpyrophosphate to the ultimate product farnesyl pyrophosphate. The protein is Isopentenyl-diphosphate delta-isomerase idi1 of Aspergillus fumigatus (strain ATCC MYA-4609 / CBS 101355 / FGSC A1100 / Af293) (Neosartorya fumigata).